The primary structure comprises 182 residues: Isopentenyl-diphosphate Delta-isomerase (182 aa).

Positions 25 and 32 each coordinate Mn(2+). The 135-residue stretch at 30 to 164 folds into the Nudix hydrolase domain; sequence RLHLAFSSWL…PWAFSPWMVM (135 aa). Cysteine 67 is a catalytic residue. Cysteine 67 provides a ligand contact to Mg(2+). A Mn(2+)-binding site is contributed by histidine 69. Residue glutamate 87 participates in Mg(2+) binding. Mn(2+) contacts are provided by glutamate 114 and glutamate 116. Residue glutamate 116 is part of the active site.

The protein belongs to the IPP isomerase type 1 family. As to quaternary structure, homodimer. The cofactor is Mg(2+). It depends on Mn(2+) as a cofactor.

Its subcellular location is the cytoplasm. It carries out the reaction isopentenyl diphosphate = dimethylallyl diphosphate. It functions in the pathway isoprenoid biosynthesis; dimethylallyl diphosphate biosynthesis; dimethylallyl diphosphate from isopentenyl diphosphate: step 1/1. Functionally, catalyzes the 1,3-allylic rearrangement of the homoallylic substrate isopentenyl (IPP) to its highly electrophilic allylic isomer, dimethylallyl diphosphate (DMAPP). This chain is Isopentenyl-diphosphate Delta-isomerase, found in Shigella dysenteriae serotype 1 (strain Sd197).